A 283-amino-acid polypeptide reads, in one-letter code: NADH-ubiquinone oxidoreductase 30.4 kDa subunit, mitochondrial (283 aa).

A mitochondrion-targeting transit peptide spans Met1 to Ser17. Residues Gly258–Lys283 are disordered.

It belongs to the complex I 30 kDa subunit family. Complex I is composed of about 40 different subunits. This is a component of the iron-sulfur protein fraction.

It is found in the mitochondrion inner membrane. It carries out the reaction a ubiquinone + NADH + 5 H(+)(in) = a ubiquinol + NAD(+) + 4 H(+)(out). Core subunit of the mitochondrial membrane respiratory chain NADH dehydrogenase (Complex I) that is believed to belong to the minimal assembly required for catalysis. Complex I functions in the transfer of electrons from NADH to the respiratory chain. The immediate electron acceptor for the enzyme is believed to be ubiquinone. The polypeptide is NADH-ubiquinone oxidoreductase 30.4 kDa subunit, mitochondrial (nuo-31) (Neurospora crassa (strain ATCC 24698 / 74-OR23-1A / CBS 708.71 / DSM 1257 / FGSC 987)).